The primary structure comprises 236 residues: Orotidine 5'-phosphate decarboxylase (236 aa).

Substrate-binding positions include D17, K39, 66 to 75 (DLKFHDIPNT), T125, R186, Q195, G215, and R216. K68 functions as the Proton donor in the catalytic mechanism.

It belongs to the OMP decarboxylase family. Type 1 subfamily. In terms of assembly, homodimer.

It carries out the reaction orotidine 5'-phosphate + H(+) = UMP + CO2. The protein operates within pyrimidine metabolism; UMP biosynthesis via de novo pathway; UMP from orotate: step 2/2. Its function is as follows. Catalyzes the decarboxylation of orotidine 5'-monophosphate (OMP) to uridine 5'-monophosphate (UMP). The sequence is that of Orotidine 5'-phosphate decarboxylase from Buchnera aphidicola subsp. Schizaphis graminum (strain Sg).